The sequence spans 131 residues: D-ribose pyranase (131 aa).

H20 (proton donor) is an active-site residue. Substrate is bound by residues D28, H98, and 120-122 (YAN).

This sequence belongs to the RbsD / FucU family. RbsD subfamily. In terms of assembly, homodecamer.

The protein resides in the cytoplasm. It catalyses the reaction beta-D-ribopyranose = beta-D-ribofuranose. The protein operates within carbohydrate metabolism; D-ribose degradation; D-ribose 5-phosphate from beta-D-ribopyranose: step 1/2. Its function is as follows. Catalyzes the interconversion of beta-pyran and beta-furan forms of D-ribose. This chain is D-ribose pyranase, found in Bacillus anthracis (strain A0248).